The chain runs to 249 residues: uncharacterized protein (249 aa).

The region spanning 4 to 71 (VRINKFLSEA…RKRYIILNKP (68 aa)) is the S4 RNA-binding domain. Asp-106 functions as the Nucleophile in the catalytic mechanism.

It belongs to the pseudouridine synthase RsuA family.

The enzyme catalyses a uridine in RNA = a pseudouridine in RNA. This is an uncharacterized protein from Aquifex aeolicus (strain VF5).